The primary structure comprises 435 residues: Histidinol dehydrogenase (435 aa).

Residues Tyr-131, Gln-189, and Asn-212 each contribute to the NAD(+) site. Residues Ser-238, Gln-260, and His-263 each coordinate substrate. Zn(2+) is bound by residues Gln-260 and His-263. Active-site proton acceptor residues include Glu-327 and His-328. Substrate-binding residues include His-328, Asp-361, Glu-415, and His-420. Zn(2+) is bound at residue Asp-361. His-420 provides a ligand contact to Zn(2+).

The protein belongs to the histidinol dehydrogenase family. In terms of assembly, homodimer. Zn(2+) is required as a cofactor.

The enzyme catalyses L-histidinol + 2 NAD(+) + H2O = L-histidine + 2 NADH + 3 H(+). The protein operates within amino-acid biosynthesis; L-histidine biosynthesis; L-histidine from 5-phospho-alpha-D-ribose 1-diphosphate: step 9/9. Catalyzes the sequential NAD-dependent oxidations of L-histidinol to L-histidinaldehyde and then to L-histidine. This chain is Histidinol dehydrogenase, found in Buchnera aphidicola subsp. Baizongia pistaciae (strain Bp).